The primary structure comprises 443 residues: F-box only protein 39 (443 aa).

Residues 16–61 (WATLPDVCLRRVFWWLGDRDRSRAALVCRKWNQMMYSADLWRYRTI) form the F-box domain.

As to quaternary structure, directly interacts with SKP1 and CUL1.

Functionally, substrate-recognition component of the SCF (SKP1-CUL1-F-box protein)-type E3 ubiquitin ligase complex. This Bos taurus (Bovine) protein is F-box only protein 39 (FBXO39).